The chain runs to 382 residues: UDP-N-acetylenolpyruvoylglucosamine reductase (382 aa).

In terms of domain architecture, FAD-binding PCMH-type spans 50-253; it reads RVGGPAVLAE…REAVLRLRAS (204 aa). Residue Arg193 is part of the active site. The Proton donor role is filled by Ser270. Glu374 is an active-site residue.

This sequence belongs to the MurB family. FAD is required as a cofactor.

The protein localises to the cytoplasm. It catalyses the reaction UDP-N-acetyl-alpha-D-muramate + NADP(+) = UDP-N-acetyl-3-O-(1-carboxyvinyl)-alpha-D-glucosamine + NADPH + H(+). Its pathway is cell wall biogenesis; peptidoglycan biosynthesis. Cell wall formation. This Nocardia farcinica (strain IFM 10152) protein is UDP-N-acetylenolpyruvoylglucosamine reductase.